A 354-amino-acid chain; its full sequence is Membrane progestin receptor alpha-B (354 aa).

Over 1–76 (MATVVMEQIG…LTLFQRHNES (76 aa)) the chain is Cytoplasmic. The chain crosses the membrane as a helical span at residues 77–97 (VNVWTHLLASLIILVKFQELS). The Extracellular portion of the chain corresponds to 98–110 (ETVDFLRDPHAQP). A helical membrane pass occupies residues 111–131 (MFILLLAAFTYLGCSALAHLL). Topologically, residues 132–141 (SAKSEISHYT) are cytoplasmic. The chain crosses the membrane as a helical span at residues 142–162 (FYFLDYVGVAVYQYGSALAHF). At 163 to 175 (YYVVEEEWHAQVR) the chain is on the extracellular side. A helical membrane pass occupies residues 176-196 (TFFLPASAFLAWLSCTGCCYG). At 197–244 (KYASPKLPKFVHKLFQVVPSGLAYCLDISPVLHRIYRCYSSEHWCADQ) the chain is on the cytoplasmic side. The chain crosses the membrane as a helical span at residues 245–265 (AVVYHCYQVLFFLISAYFFSY). The Extracellular portion of the chain corresponds to 266–277 (PHPERWFPGRCD). Residues 278–298 (FIGQGHQIFHVFLVLCTLVQI) traverse the membrane as a helical segment. The Cytoplasmic segment spans residues 299–318 (EAVRLDYTERRRLYEHLHGD). A helical membrane pass occupies residues 319–339 (LAHDAVALFIFTACCSALTAF). The Extracellular segment spans residues 340–354 (YVRKRVKTYLEEKQE).

The protein belongs to the ADIPOR family.

The protein resides in the cell membrane. Functionally, steroid membrane receptor. Signals upon progestin binding, resulting in rapid activation of MAPK and down-regulation of adenylyl cyclase activity. Interacts with steroids with varying degrees of affinity, showing specificity for activation by the maturation-inducing steroid (MIS) 4-pregnen-17,20beta-diol-3-one (17,20beta-DHP). Capable of mediating progestin-induced oocyte maturation. The chain is Membrane progestin receptor alpha-B (paqr7b) from Danio rerio (Zebrafish).